Here is a 400-residue protein sequence, read N- to C-terminus: Na(+)/H(+) antiporter NhaA (400 aa).

11 helical membrane passes run 26–46, 71–91, 107–127, 137–157, 166–186, 189–209, 225–245, 273–293, 299–319, 340–360, and 373–393; these read AGGI…NSPL, LIHW…GMEV, IFPA…YWFI, GWAI…ALLS, IFLL…IALF, HGLS…LILL, AILW…GVII, FVIL…GIDV, PLLL…IFGF, IFAV…LASL, and LSRL…YLFL.

The protein belongs to the NhaA Na(+)/H(+) (TC 2.A.33) antiporter family.

It localises to the cell inner membrane. It carries out the reaction Na(+)(in) + 2 H(+)(out) = Na(+)(out) + 2 H(+)(in). Functionally, na(+)/H(+) antiporter that extrudes sodium in exchange for external protons. This Haemophilus influenzae (strain ATCC 51907 / DSM 11121 / KW20 / Rd) protein is Na(+)/H(+) antiporter NhaA.